Reading from the N-terminus, the 61-residue chain is Myrmicitoxin(1)-Pm5a (61 aa).

The N-terminal stretch at 1-23 is a signal peptide; the sequence is MKAIIFLFAVLTVVAIIIPIISG. A propeptide spanning residues 24–33 is cleaved from the precursor; sequence EPNAGPLAAS. At glutamine 60 the chain carries Glutamine amide.

Belongs to the formicidae venom clade 2 family. As to expression, expressed by the venom gland.

It localises to the secreted. Functionally, toxin that causes a rapid and irreversible paralysis when intrathoracically injected into insects (blowflies). Does not cause spontaneous nocifensive behaviors by intraplantar injection in mice. This chain is Myrmicitoxin(1)-Pm5a, found in Pogonomyrmex maricopa (Maricopa harvester ant).